Consider the following 1061-residue polypeptide: E3 SUMO-protein ligase ZNF451 (1061 aa).

Residues 1-38 (MGDPGSEIIESVPPAGPEASESTTDENEDDIQFVSEGP) are disordered. The segment at 1-246 (MGDPGSEIIE…TDDGHNNNLL (246 aa)) is sufficient for E3 SUMO-protein ligase activity. The segment at 1–344 (MGDPGSEIIE…RVHCRNAGPV (344 aa)) is important for interaction with SUMO1 and SUMO2. Residues 30–37 (DIQFVSEG) form an interaction with SUMO2 1 region. Positions 38-41 (PLRP) match the PLRP motif. The tract at residues 42 to 50 (VLEYIDLVS) is interaction with SUMO2 2. Glycyl lysine isopeptide (Lys-Gly) (interchain with G-Cter in SUMO2) cross-links involve residues Lys75, Lys77, Lys106, Ile121, Ala130, Leu138, Lys139, Lys144, and Lys153. Ser155 carries the post-translational modification Phosphoserine. An Omega-N-methylarginine modification is found at Arg158. Residues Val164 and Lys167 each participate in a glycyl lysine isopeptide (Lys-Gly) (interchain with G-Cter in SUMO2) cross-link. The interval 168-525 (PILCPIMHCN…HMSRIHGGAH (358 aa)) is important for interaction with SMAD4. The C2H2-type 1 zinc-finger motif lies at 169-195 (ILCPIMHCNKEFDNGHLLLGHLKRFDH). Residues Gln226, Gly240, Pro247, Ser263, Lys270, Lys275, Lys283, Asp286, Lys288, Pro293, Lys301, and Lys309 each participate in a glycyl lysine isopeptide (Lys-Gly) (interchain with G-Cter in SUMO2) cross-link. The segment at 253-277 (FACPNCFLLFSRKEECSKHMSGKNH) adopts a C2H2-type 2 zinc-finger fold. The segment at 315 to 337 (VKCVACHKTLRSHMELTAHFRVH) adopts a C2H2-type 3 zinc-finger fold. Lys357 is covalently cross-linked (Glycyl lysine isopeptide (Lys-Gly) (interchain with G-Cter in SUMO2)). The segment at 362–386 (GYCPDCNQVFVDETSTQNHKQNSGH) adopts a C2H2-type 4 zinc-finger fold. Residue Lys423 forms a Glycyl lysine isopeptide (Lys-Gly) (interchain with G-Cter in SUMO2) linkage. Phosphoserine is present on Ser432. Residues Lys434, Lys446, Lys452, Lys454, Lys464, Phe473, Val490, Cys500, Lys505, Asp508, Gly522, Trp532, Lys543, and Lys585 each participate in a glycyl lysine isopeptide (Lys-Gly) (interchain with G-Cter in SUMO2) cross-link. A C2H2-type 5 zinc finger spans residues 498–521 (YKCVVCGKVCDDSGVIRLHMSRIH). The C2H2-type 6 zinc finger occupies 531-554 (FWCRTCKKELTRKDTIMAHVTEFH). Residues 606–631 (WQCRICEDMFDSQEYVKQHCMSLASH) form a C2H2-type 7; atypical zinc finger. Residues Lys632, Lys647, and Lys664 each participate in a glycyl lysine isopeptide (Lys-Gly) (interchain with G-Cter in SUMO2) cross-link. The segment at 636–659 (YSCAHCRKPFHKIETLYRHCQDEH) adopts a C2H2-type 8 zinc-finger fold. A C2H2-type 9 zinc finger spans residues 667 to 690 (YFCGLCDLIFNVEEAFLSHYEEHH). Residue Lys706 forms a Glycyl lysine isopeptide (Lys-Gly) (interchain with G-Cter in SUMO1); alternate linkage. Residue Lys706 forms a Glycyl lysine isopeptide (Lys-Gly) (interchain with G-Cter in SUMO2); alternate linkage. Residues Lys731 and Lys748 each participate in a glycyl lysine isopeptide (Lys-Gly) (interchain with G-Cter in SUMO2) cross-link. Residues 753 to 776 (FRCSLCSATAQNLTDMNTHIHQVH) form a C2H2-type 10 zinc finger. Glycyl lysine isopeptide (Lys-Gly) (interchain with G-Cter in SUMO2) cross-links involve residues Lys777, Lys779, Lys790, Lys817, Lys827, Lys832, Lys843, Lys845, Lys852, Lys951, Lys992, and Lys993. Residues 789-812 (IKCGTCTKAFHDPESAQQHFHRKH) form a C2H2-type 11 zinc finger. An important for ubiquitin binding region spans residues 1050–1061 (LEEAIRRSLEEM).

This sequence belongs to the krueppel C2H2-type zinc-finger protein family. Homooligomer. Interacts (via N-terminal region) with SUMO1. Interacts (via N-terminal region) with SUMO2. Interacts simultaneously with two SUMO2 chains. Identified in a complex with SUMO2 and UBE2I/UBC9, where one ZNF451 interacts with one UBE2I/UBC9 and two SUMO2 chains, one bound to the UBE2I/UBC9 active site and the other to another region of the same UBE2I/UBC9 molecule. Interacts (via C-terminus) with ubiquitin. Interacts (via N-terminal zinc-finger domains) with SMAD4 (via MH2 domain). Interacts with SMAD2 and SMAD3. Identified in a complex that contains at least ZNF451, SMAD2, SMAD3 and SMAD4. Interacts with EP300. Inhibits interaction between EP300 and the SMAD4 complex. Interacts with SIMC1. Sumoylated. Predominantly sumoylated on the N-terminal region that is important for interaction with SUMO1 and SUMO2. Sumoylation is important for localization in nuclear granules; desumoylation leads to diffuse nucleoplasmic location. Autosumoylated (in vitro). Sumoylation enhances E3 SUMO-protein ligase activity.

The protein resides in the nucleus. Its subcellular location is the PML body. It localises to the nucleoplasm. It functions in the pathway protein modification; protein sumoylation. Its function is as follows. E3 SUMO-protein ligase; has a preference for SUMO2 and SUMO3 and facilitates UBE2I/UBC9-mediated sumoylation of target proteins. Plays a role in protein SUMO2 modification in response to stress caused by DNA damage and by proteasome inhibitors (in vitro). Required for MCM4 sumoylation. Has no activity with SUMO1. Preferentially transfers an additional SUMO2 chain onto the SUMO2 consensus site 'Lys-11'. Negatively regulates transcriptional activation mediated by the SMAD4 complex in response to TGF-beta signaling. Inhibits EP300-mediated acetylation of histone H3 at 'Lys-9'. Plays a role in regulating the transcription of AR targets. The sequence is that of E3 SUMO-protein ligase ZNF451 (ZNF451) from Homo sapiens (Human).